The chain runs to 448 residues: Probable glycine dehydrogenase (decarboxylating) subunit 1 (448 aa).

The protein belongs to the GcvP family. N-terminal subunit subfamily. In terms of assembly, the glycine cleavage system is composed of four proteins: P, T, L and H. In this organism, the P 'protein' is a heterodimer of two subunits.

The catalysed reaction is N(6)-[(R)-lipoyl]-L-lysyl-[glycine-cleavage complex H protein] + glycine + H(+) = N(6)-[(R)-S(8)-aminomethyldihydrolipoyl]-L-lysyl-[glycine-cleavage complex H protein] + CO2. Functionally, the glycine cleavage system catalyzes the degradation of glycine. The P protein binds the alpha-amino group of glycine through its pyridoxal phosphate cofactor; CO(2) is released and the remaining methylamine moiety is then transferred to the lipoamide cofactor of the H protein. This chain is Probable glycine dehydrogenase (decarboxylating) subunit 1, found in Thermomicrobium roseum (strain ATCC 27502 / DSM 5159 / P-2).